A 129-amino-acid chain; its full sequence is Large ribosomal subunit protein bL17 (129 aa).

The protein belongs to the bacterial ribosomal protein bL17 family. As to quaternary structure, part of the 50S ribosomal subunit. Contacts protein L32.

The protein is Large ribosomal subunit protein bL17 of Stutzerimonas stutzeri (strain A1501) (Pseudomonas stutzeri).